We begin with the raw amino-acid sequence, 249 residues long: MLKKIKISLILALGLTSLQAFGQENPDVKIDKLKDNLYVYTTYNTFNGTKYAANAVYLVTDKGVVVIDCPWGEDKFKSFTDEIYKKHGKKVIMNIATHSHDDRAGGLEYFGKIGAKTYSTKMTDSILAKENKPRAQYTFDNNKSFKVGKSEFQVYYPGKGHTADNVVVWFPKEKVLVGGCIIKSADSKDLGYIGEAYVNDWTQSVHNIQQKFSGAQYVVAGHDDWKDQRSIQRTLDLINEYQQKQKASN.

An N-terminal signal peptide occupies residues 1-22 (MLKKIKISLILALGLTSLQAFG). Positions 98, 100, 102, 161, and 180 each coordinate Zn(2+). K183 contributes to the substrate binding site. A Zn(2+)-binding site is contributed by H222.

Belongs to the metallo-beta-lactamase superfamily. Class-B beta-lactamase family. As to quaternary structure, monomer. Zn(2+) is required as a cofactor.

The protein localises to the periplasm. The enzyme catalyses a beta-lactam + H2O = a substituted beta-amino acid. Confers resistance to the different beta-lactams antibiotics (penicillin, cephalosporin and carbapenem) via the hydrolysis of the beta-lactam ring. This Elizabethkingia meningoseptica (Chryseobacterium meningosepticum) protein is Metallo-beta-lactamase type 2 (blaB2).